A 492-amino-acid chain; its full sequence is Putative methyl-accepting chemotaxis AlkN (492 aa).

Helical transmembrane passes span 9 to 29 (FFLI…GMRL) and 159 to 179 (YVYF…FLLM). In terms of domain architecture, HAMP spans 180–231 (KKTRSSIDEIVHVMNDMSRGDLTYRTIPSNDEVGKMQSSIIAMGAGVSALIE). Residues 236–472 (IQGDLFNSAG…DMLDNANIIR (237 aa)) enclose the Methyl-accepting transducer domain.

Belongs to the methyl-accepting chemotaxis (MCP) protein family.

Its subcellular location is the membrane. The protein operates within hydrocarbon metabolism; alkane degradation. Its function is as follows. Chemotactic-signal transducers respond to changes in the concentration of attractants and repellents in the environment, transduce a signal from the outside to the inside of the cell, and facilitate sensory adaptation through the variation of the level of methylation. This Ectopseudomonas oleovorans (Pseudomonas oleovorans) protein is Putative methyl-accepting chemotaxis AlkN (alkN).